A 133-amino-acid chain; its full sequence is Large ribosomal subunit protein bL12 (133 aa).

This sequence belongs to the bacterial ribosomal protein bL12 family. Homodimer. Part of the ribosomal stalk of the 50S ribosomal subunit. Forms a multimeric L10(L12)X complex, where L10 forms an elongated spine to which 2 to 4 L12 dimers bind in a sequential fashion. Binds GTP-bound translation factors.

In terms of biological role, forms part of the ribosomal stalk which helps the ribosome interact with GTP-bound translation factors. Is thus essential for accurate translation. This is Large ribosomal subunit protein bL12 from Trichodesmium erythraeum (strain IMS101).